A 441-amino-acid chain; its full sequence is L-seryl-tRNA(Sec) selenium transferase (441 aa).

Lys-283 bears the N6-(pyridoxal phosphate)lysine mark.

It belongs to the SelA family. Requires pyridoxal 5'-phosphate as cofactor.

The protein localises to the cytoplasm. The catalysed reaction is L-seryl-tRNA(Sec) + selenophosphate + H(+) = L-selenocysteinyl-tRNA(Sec) + phosphate. Its pathway is aminoacyl-tRNA biosynthesis; selenocysteinyl-tRNA(Sec) biosynthesis; selenocysteinyl-tRNA(Sec) from L-seryl-tRNA(Sec) (bacterial route): step 1/1. In terms of biological role, converts seryl-tRNA(Sec) to selenocysteinyl-tRNA(Sec) required for selenoprotein biosynthesis. The chain is L-seryl-tRNA(Sec) selenium transferase from Campylobacter concisus (strain 13826).